The sequence spans 264 residues: Probable pectate lyase D (264 aa).

The first 17 residues, 1-17 (MFFKQLAVLSFATSALA), serve as a signal peptide directing secretion. Residue asparagine 60 is glycosylated (N-linked (GlcNAc...) asparagine). Residues 234–264 (YEGTDNNDEEPQEISTGPSNACQYTDPLPSC) form a disordered region. The segment covering 235–245 (EGTDNNDEEPQ) has biased composition (acidic residues). Polar residues predominate over residues 246–256 (EISTGPSNACQ).

This sequence belongs to the polysaccharide lyase 3 family. Ca(2+) serves as cofactor.

It is found in the secreted. It carries out the reaction Eliminative cleavage of (1-&gt;4)-alpha-D-galacturonan to give oligosaccharides with 4-deoxy-alpha-D-galact-4-enuronosyl groups at their non-reducing ends.. Functionally, pectinolytic enzyme consist of four classes of enzymes: pectin lyase, polygalacturonase, pectin methylesterase and rhamnogalacturonase. Among pectinolytic enzymes, pectin lyase is the most important in depolymerization of pectin, since it cleaves internal glycosidic bonds of highly methylated pectins. Favors pectate, the anion, over pectin, the methyl ester. The protein is Probable pectate lyase D (plyD) of Emericella nidulans (strain FGSC A4 / ATCC 38163 / CBS 112.46 / NRRL 194 / M139) (Aspergillus nidulans).